Reading from the N-terminus, the 467-residue chain is Phosphomethylpyrimidine synthase (467 aa).

Residues Asn80, Met109, Tyr139, His175, 195–197, 236–239, and Glu275 each bind substrate; these read SRG and DSLR. Zn(2+) is bound at residue His279. Tyr302 contacts substrate. His343 is a binding site for Zn(2+). Residues Cys423, Cys426, and Cys431 each coordinate [4Fe-4S] cluster.

Belongs to the ThiC family. [4Fe-4S] cluster serves as cofactor.

The enzyme catalyses 5-amino-1-(5-phospho-beta-D-ribosyl)imidazole + S-adenosyl-L-methionine = 4-amino-2-methyl-5-(phosphooxymethyl)pyrimidine + CO + 5'-deoxyadenosine + formate + L-methionine + 3 H(+). It functions in the pathway cofactor biosynthesis; thiamine diphosphate biosynthesis. In terms of biological role, catalyzes the synthesis of the hydroxymethylpyrimidine phosphate (HMP-P) moiety of thiamine from aminoimidazole ribotide (AIR) in a radical S-adenosyl-L-methionine (SAM)-dependent reaction. This chain is Phosphomethylpyrimidine synthase, found in Synechococcus sp. (strain WH7803).